Consider the following 600-residue polypeptide: UvrABC system protein C (600 aa).

The GIY-YIG domain maps to 15 to 92; it reads EKAGCYLMKD…IKKYQPYYNV (78 aa). The UVR domain occupies 197-232; it reads QEVKKDLTNKMLQASADLEFERAGELRDQLKYIEET.

It belongs to the UvrC family. As to quaternary structure, interacts with UvrB in an incision complex.

It localises to the cytoplasm. The UvrABC repair system catalyzes the recognition and processing of DNA lesions. UvrC both incises the 5' and 3' sides of the lesion. The N-terminal half is responsible for the 3' incision and the C-terminal half is responsible for the 5' incision. The chain is UvrABC system protein C from Lactobacillus delbrueckii subsp. bulgaricus (strain ATCC BAA-365 / Lb-18).